Consider the following 351-residue polypeptide: Auxin-responsive protein IAA27 (351 aa).

The segment at 1 to 37 is disordered; sequence MMNLISFETPPLGRRSQDGGSSSSSITAATTTTNKAK. The span at 21–34 shows a compositional bias: low complexity; the sequence is SSSSSITAATTTTN. Residues 233 to 327 enclose the PB1 domain; that stretch reads NMFAKVHMDG…SAKRLYIAKN (95 aa).

The protein belongs to the Aux/IAA family. As to quaternary structure, homodimers and heterodimers. In terms of tissue distribution, expressed in roots and seedlings.

The protein localises to the nucleus. In terms of biological role, aux/IAA proteins are short-lived transcriptional factors that function as repressors of early auxin response genes at low auxin concentrations. The protein is Auxin-responsive protein IAA27 (IAA27) of Oryza sativa subsp. japonica (Rice).